We begin with the raw amino-acid sequence, 274 residues long: Ribosomal RNA small subunit methyltransferase A (274 aa).

Residues histidine 15, leucine 17, glycine 42, glutamate 64, aspartate 89, and asparagine 109 each coordinate S-adenosyl-L-methionine.

This sequence belongs to the class I-like SAM-binding methyltransferase superfamily. rRNA adenine N(6)-methyltransferase family. RsmA subfamily.

It is found in the cytoplasm. It catalyses the reaction adenosine(1518)/adenosine(1519) in 16S rRNA + 4 S-adenosyl-L-methionine = N(6)-dimethyladenosine(1518)/N(6)-dimethyladenosine(1519) in 16S rRNA + 4 S-adenosyl-L-homocysteine + 4 H(+). In terms of biological role, specifically dimethylates two adjacent adenosines (A1518 and A1519) in the loop of a conserved hairpin near the 3'-end of 16S rRNA in the 30S particle. May play a critical role in biogenesis of 30S subunits. This Synechococcus sp. (strain CC9605) protein is Ribosomal RNA small subunit methyltransferase A.